A 304-amino-acid polypeptide reads, in one-letter code: Methionyl-tRNA formyltransferase (304 aa).

Position 109 to 112 (109 to 112 (SDLP)) interacts with (6S)-5,6,7,8-tetrahydrofolate.

Belongs to the Fmt family.

The catalysed reaction is L-methionyl-tRNA(fMet) + (6R)-10-formyltetrahydrofolate = N-formyl-L-methionyl-tRNA(fMet) + (6S)-5,6,7,8-tetrahydrofolate + H(+). Functionally, attaches a formyl group to the free amino group of methionyl-tRNA(fMet). The formyl group appears to play a dual role in the initiator identity of N-formylmethionyl-tRNA by promoting its recognition by IF2 and preventing the misappropriation of this tRNA by the elongation apparatus. This Rickettsia bellii (strain RML369-C) protein is Methionyl-tRNA formyltransferase.